Consider the following 146-residue polypeptide: Hemoglobin subunit beta-1 (146 aa).

Residues 2–146 (GLTAHDRQLI…IADALGKGYH (145 aa)) enclose the Globin domain. Heme b-binding residues include His63 and His92.

Belongs to the globin family. As to quaternary structure, heterotetramer of two alpha chains and two beta chains. As to expression, red blood cells.

In terms of biological role, involved in oxygen transport from the lung to the various peripheral tissues. In Xenopus borealis (Kenyan clawed frog), this protein is Hemoglobin subunit beta-1 (hbb1).